Consider the following 112-residue polypeptide: Macrodomain Ori protein (112 aa).

Residues 91–112 are disordered; sequence FHTLSGGKPQVEGAEDYTEADD. Residues 103 to 112 are compositionally biased toward acidic residues; that stretch reads GAEDYTEADD.

Belongs to the MaoP family.

Involved in the organization of the Ori region of the chromosome into a macrodomain (MD). It constrains DNA mobility in the Ori macrodomain and limits long-distance DNA interactions with other chromosomal regions. The sequence is that of Macrodomain Ori protein from Salmonella choleraesuis (strain SC-B67).